Here is a 1183-residue protein sequence, read N- to C-terminus: M-phase phosphoprotein 9 (1183 aa).

Disordered stretches follow at residues 28–52 (GLNLNTDRSSPHLSTNGVSSFSGKT), 300–334 (KLKQNQPKRAHVEDGGSRSKQGNEQSKKTPIEKSD), and 472–495 (ISFSPDSVLEPSMSSPSDIDSFSQ). Over residues 324-334 (QSKKTPIEKSD) the composition is skewed to basic and acidic residues. The tract at residues 401-800 (TSNEMKLPSL…EAQVKQVEHE (400 aa)) is required for its centrosomal localization. Residues 451–500 (KPKQQISGIQPHGLPNALDDRISFSPDSVLEPSMSSPSDIDSFSQASNVT) are interaction with CEP97. Positions 483 to 495 (SMSSPSDIDSFSQ) are enriched in low complexity. Residues 609–804 (DLRAYYESEI…KQVEHENMLS (196 aa)) adopt a coiled-coil conformation. The residue at position 781 (serine 781) is a Phosphoserine; by TTBK2. Residue lysine 784 forms a Glycyl lysine isopeptide (Lys-Gly) (interchain with G-Cter in ubiquitin) linkage. A Phosphoserine; by TTBK2 modification is found at serine 788. The segment at 801 to 1031 (NMLSLRHNSR…PVSTLQRTNP (231 aa)) is interaction with KIF24. 2 disordered regions span residues 863-894 (LGHRSPLEKDSSPGSSSTSLLIKKQRETSDTP) and 910-999 (NWGT…GFSH). Residues 921–936 (SNINPRQTETSVNASR) are compositionally biased toward polar residues. Low complexity predominate over residues 949–967 (LNSASQRSSSLPPSNRKSS). The residue at position 994 (serine 994) is a Phosphoserine. Residues 1109–1174 (RTLAETERFF…GSVRMTLKKF (66 aa)) are a coiled coil.

In terms of assembly, interacts with CCP110, CEP97 and KIF24. In terms of processing, TTBK2-mediated phosphorylation at Ser-781 and Ser-788, promotes its ubiquitination at Lys-784 leading to proteasomal degradation, loss of MPHOSPH9 facilitates the removal of the CP110-CEP97 complex from the mother centrioles, promoting the initiation of ciliogenesis. Phosphorylated in M (mitotic) phase. Post-translationally, ubiquitinated at Lys-784, leading to proteasomal degradation.

It is found in the cytoplasm. The protein localises to the cytoskeleton. It localises to the microtubule organizing center. Its subcellular location is the centrosome. The protein resides in the centriole. It is found in the golgi apparatus membrane. In terms of biological role, negatively regulates cilia formation by recruiting the CP110-CEP97 complex (a negative regulator of ciliogenesis) at the distal end of the mother centriole in ciliary cells. At the beginning of cilia formation, MPHOSPH9 undergoes TTBK2-mediated phosphorylation and degradation via the ubiquitin-proteasome system and removes itself and the CP110-CEP97 complex from the distal end of the mother centriole, which subsequently promotes cilia formation. This Homo sapiens (Human) protein is M-phase phosphoprotein 9 (MPHOSPH9).